Reading from the N-terminus, the 176-residue chain is MKKKYHLTPDELQLFKESIAGAKKLRQDTIVHHTPPKLGKKIAPERLLQEQVDASYYFSDEFQPLLDTDGPTRYVRPGVDNFEVKKLRRGDYSPEMFLDLHGLTQKQAKQELGALIAACKREHVHCACVMHGHGKHVLKQQTPLWMAQHPDVLAFHQAPKEWGGTAALLLLIELEE.

A Smr domain is found at 98 to 173 (LDLHGLTQKQ…GTAALLLLIE (76 aa)).

This sequence belongs to the SmrB family. In terms of assembly, associates with collided ribosomes, but not with correctly translating polysomes.

Functionally, acts as a ribosome collision sensor. Detects stalled/collided disomes (pairs of ribosomes where the leading ribosome is stalled and a second ribosome has collided with it) and endonucleolytically cleaves mRNA at the 5' boundary of the stalled ribosome. Stalled/collided disomes form a new interface (primarily via the 30S subunits) that binds SmrB. Cleaved mRNA becomes available for tmRNA ligation, leading to ribosomal subunit dissociation and rescue of stalled ribosomes. The chain is Ribosome rescue factor SmrB from Yersinia pseudotuberculosis serotype O:1b (strain IP 31758).